Consider the following 297-residue polypeptide: tRNA dimethylallyltransferase (297 aa).

ATP is bound at residue 15 to 22; the sequence is GPTASGKS. 17–22 provides a ligand contact to substrate; the sequence is TASGKS. Interaction with substrate tRNA regions lie at residues 40-43 and 164-168; these read DSMQ and QRIVR.

This sequence belongs to the IPP transferase family. As to quaternary structure, monomer. Mg(2+) is required as a cofactor.

The enzyme catalyses adenosine(37) in tRNA + dimethylallyl diphosphate = N(6)-dimethylallyladenosine(37) in tRNA + diphosphate. Catalyzes the transfer of a dimethylallyl group onto the adenine at position 37 in tRNAs that read codons beginning with uridine, leading to the formation of N6-(dimethylallyl)adenosine (i(6)A). This chain is tRNA dimethylallyltransferase, found in Rhizobium leguminosarum bv. trifolii (strain WSM2304).